Reading from the N-terminus, the 247-residue chain is Fibroblast growth factor 14 (247 aa).

Disordered regions lie at residues 1–37 (MAAAIASGLIRQKRQAREQHWDRPSASRRRSSPSKNR) and 216–247 (ETVPKAGVTPSKSTSASAIMNGGKPVNKCKTT). Over residues 15–25 (QAREQHWDRPS) the composition is skewed to basic and acidic residues.

It belongs to the heparin-binding growth factors family. Interacts with SCN8A. In terms of tissue distribution, brain and testis; widely distributed in the developing nervous system. In adult, high levels in the granular layer of the cerebellum, less in hippocampus and olfactory bulb.

It is found in the nucleus. In terms of biological role, probably involved in nervous system development and function. The protein is Fibroblast growth factor 14 (Fgf14) of Mus musculus (Mouse).